The following is a 222-amino-acid chain: UPF0758 protein YicR (222 aa).

The MPN domain maps to 100 to 222 (PLLSPEMTRE…YVSFAERGWI (123 aa)). Positions 171, 173, and 184 each coordinate Zn(2+). The JAMM motif motif lies at 171–184 (HNHPSGCAEPSKAD).

This sequence belongs to the UPF0758 family. YicR subfamily.

The sequence is that of UPF0758 protein YicR from Shigella dysenteriae serotype 1 (strain Sd197).